The primary structure comprises 370 residues: UDP-N-acetylglucosamine--N-acetylmuramyl-(pentapeptide) pyrophosphoryl-undecaprenol N-acetylglucosamine transferase (370 aa).

UDP-N-acetyl-alpha-D-glucosamine contacts are provided by residues 15–17 (TGG), Asn129, Arg171, Ser200, Ile256, and Gln301.

It belongs to the glycosyltransferase 28 family. MurG subfamily.

Its subcellular location is the cell membrane. It catalyses the reaction di-trans,octa-cis-undecaprenyl diphospho-N-acetyl-alpha-D-muramoyl-L-alanyl-D-glutamyl-meso-2,6-diaminopimeloyl-D-alanyl-D-alanine + UDP-N-acetyl-alpha-D-glucosamine = di-trans,octa-cis-undecaprenyl diphospho-[N-acetyl-alpha-D-glucosaminyl-(1-&gt;4)]-N-acetyl-alpha-D-muramoyl-L-alanyl-D-glutamyl-meso-2,6-diaminopimeloyl-D-alanyl-D-alanine + UDP + H(+). Its pathway is cell wall biogenesis; peptidoglycan biosynthesis. Cell wall formation. Catalyzes the transfer of a GlcNAc subunit on undecaprenyl-pyrophosphoryl-MurNAc-pentapeptide (lipid intermediate I) to form undecaprenyl-pyrophosphoryl-MurNAc-(pentapeptide)GlcNAc (lipid intermediate II). In Caldicellulosiruptor saccharolyticus (strain ATCC 43494 / DSM 8903 / Tp8T 6331), this protein is UDP-N-acetylglucosamine--N-acetylmuramyl-(pentapeptide) pyrophosphoryl-undecaprenol N-acetylglucosamine transferase.